The chain runs to 506 residues: Ubiquitin carboxyl-terminal hydrolase 22 (506 aa).

The UBP-type zinc-finger motif lies at A4–L121. Residues C6, H8, C46, C49, C59, C62, C67, H72, H76, H82, C95, and C98 each coordinate Zn(2+). The region spanning R159 to Q501 is the USP domain. C168 (nucleophile) is an active-site residue. The active-site Proton acceptor is the H460.

This sequence belongs to the peptidase C19 family. UBP8 subfamily. In terms of assembly, component of some SAGA transcription coactivator-HAT complexes.

The protein localises to the nucleus. The enzyme catalyses Thiol-dependent hydrolysis of ester, thioester, amide, peptide and isopeptide bonds formed by the C-terminal Gly of ubiquitin (a 76-residue protein attached to proteins as an intracellular targeting signal).. Its function is as follows. Histone deubiquitinating component of the transcription regulatory histone acetylation (HAT) complex SAGA. Catalyzes the deubiquitination of both histones H2A and H2B, thereby acting as a coactivator. Recruited to specific gene promoters by activators, where it is required for transcription. The sequence is that of Ubiquitin carboxyl-terminal hydrolase 22 (usp22) from Danio rerio (Zebrafish).